A 354-amino-acid chain; its full sequence is Uroporphyrinogen decarboxylase (354 aa).

Residues 27-31 (RQAGR), D77, Y154, S209, and H327 each bind substrate.

The protein belongs to the uroporphyrinogen decarboxylase family. In terms of assembly, homodimer.

It is found in the cytoplasm. It carries out the reaction uroporphyrinogen III + 4 H(+) = coproporphyrinogen III + 4 CO2. The protein operates within porphyrin-containing compound metabolism; protoporphyrin-IX biosynthesis; coproporphyrinogen-III from 5-aminolevulinate: step 4/4. Functionally, catalyzes the decarboxylation of four acetate groups of uroporphyrinogen-III to yield coproporphyrinogen-III. In Saccharophagus degradans (strain 2-40 / ATCC 43961 / DSM 17024), this protein is Uroporphyrinogen decarboxylase.